A 204-amino-acid chain; its full sequence is High frequency lysogenization protein HflD homolog (204 aa).

The protein belongs to the HflD family.

The protein localises to the cytoplasm. The protein resides in the cell inner membrane. The chain is High frequency lysogenization protein HflD homolog from Stenotrophomonas maltophilia (strain R551-3).